Here is a 375-residue protein sequence, read N- to C-terminus: MEMQQNCSISCFWETQPLGCVKISCIFYHSKPRNINGLFLPPSSNIILQKETQEGIPPPTQSQEPLKPQENISRPIHHPLVLKTNFEEEEEEEGEQNDASSLWTKTPEEIEEKRAIKEMCYKSGEYYRVHTPSDISSSKSIASIVEKEIEKSLESGSELQEGDGLTVPTKFSLFERQGEIKASLDRKPRTDIAAFENGGGDCYVPQRIIFLGVDENEVLTEEKESTISKCSNAKVNDVHPVMKPHFKGVKKRKWIYDEPKNFPEPGMQRVQASNPKNKMSYHRNNKNKNSENASYIHVQRDAVRTVSLNAPPHGRPPHGSYNKADVNKEPKFKLCSDKYMSTSYNGSAWQKRIPFSKTYSKNEKIYTEPRRNGSK.

The tract at residues 54–78 is disordered; the sequence is EGIPPPTQSQEPLKPQENISRPIHH.

This is an uncharacterized protein from Bos taurus (Bovine).